The following is a 156-amino-acid chain: Small ribosomal subunit protein uS7 (156 aa).

It belongs to the universal ribosomal protein uS7 family. Part of the 30S ribosomal subunit. Contacts proteins S9 and S11.

One of the primary rRNA binding proteins, it binds directly to 16S rRNA where it nucleates assembly of the head domain of the 30S subunit. Is located at the subunit interface close to the decoding center, probably blocks exit of the E-site tRNA. This chain is Small ribosomal subunit protein uS7, found in Chromobacterium violaceum (strain ATCC 12472 / DSM 30191 / JCM 1249 / CCUG 213 / NBRC 12614 / NCIMB 9131 / NCTC 9757 / MK).